We begin with the raw amino-acid sequence, 140 residues long: Large ribosomal subunit protein uL16 (140 aa).

The segment at 1-24 (MALAPARTKYRKSQKGSRAGNAKR) is disordered.

It belongs to the universal ribosomal protein uL16 family. In terms of assembly, part of the 50S ribosomal subunit.

In terms of biological role, binds 23S rRNA and is also seen to make contacts with the A and possibly P site tRNAs. In Opitutus terrae (strain DSM 11246 / JCM 15787 / PB90-1), this protein is Large ribosomal subunit protein uL16.